A 44-amino-acid polypeptide reads, in one-letter code: Mu-conotoxin-like Cal 12.1.2f (44 aa).

4 disulfide bridges follow: cysteine 3-cysteine 15, cysteine 10-cysteine 27, cysteine 17-cysteine 32, and cysteine 26-cysteine 38. Tryptophan 16 bears the 6'-bromotryptophan mark. Proline 22 is modified (4-hydroxyproline). A 6'-bromotryptophan mark is found at tryptophan 36 and tryptophan 37. Proline 39 is modified (4-hydroxyproline). Tryptophan 43 bears the 6'-bromotryptophan mark.

In terms of tissue distribution, expressed by the venom duct.

The protein resides in the secreted. Functionally, mu-conotoxins block voltage-gated sodium channels. This toxin reversibly blocks voltage-gated sodium channel in cephalopods, with no alteration in the voltage dependence of sodium conductance or on the kinetics of inactivation. This is Mu-conotoxin-like Cal 12.1.2f from Californiconus californicus (California cone).